A 543-amino-acid chain; its full sequence is Protein MGF 505-10R (543 aa).

It belongs to the asfivirus MGF 505 family.

In terms of biological role, plays a role in virus cell tropism, and may be required for efficient virus replication in macrophages. The polypeptide is Protein MGF 505-10R (Ornithodoros (relapsing fever ticks)).